Consider the following 682-residue polypeptide: Potassium-transporting ATPase ATP-binding subunit (682 aa).

The next 4 membrane-spanning stretches (helical) occupy residues 35–55, 62–82, 219–239, and 254–274; these read VMFV…AMAA, TGFT…ANFA, IALT…TVTL, and VLVA…LSAI. Asp-307 (4-aspartylphosphate intermediate) is an active-site residue. ATP-binding positions include Asp-344, Glu-348, 377–384, and Lys-395; that span reads FSAQTRMS. Mg(2+)-binding residues include Asp-518 and Asp-522. 3 helical membrane passes run 577–597, 616–636, and 656–676; these read TFSI…AFAA, AILS…PLAL, and IYGV…DMLL.

The protein belongs to the cation transport ATPase (P-type) (TC 3.A.3) family. Type IA subfamily. The system is composed of three essential subunits: KdpA, KdpB and KdpC.

Its subcellular location is the cell inner membrane. The catalysed reaction is K(+)(out) + ATP + H2O = K(+)(in) + ADP + phosphate + H(+). Part of the high-affinity ATP-driven potassium transport (or Kdp) system, which catalyzes the hydrolysis of ATP coupled with the electrogenic transport of potassium into the cytoplasm. This subunit is responsible for energy coupling to the transport system and for the release of the potassium ions to the cytoplasm. This Erwinia tasmaniensis (strain DSM 17950 / CFBP 7177 / CIP 109463 / NCPPB 4357 / Et1/99) protein is Potassium-transporting ATPase ATP-binding subunit.